The sequence spans 98 residues: Co-chaperonin GroES 3 (98 aa).

This sequence belongs to the GroES chaperonin family. In terms of assembly, heptamer of 7 subunits arranged in a ring. Interacts with the chaperonin GroEL.

It localises to the cytoplasm. In terms of biological role, together with the chaperonin GroEL, plays an essential role in assisting protein folding. The GroEL-GroES system forms a nano-cage that allows encapsulation of the non-native substrate proteins and provides a physical environment optimized to promote and accelerate protein folding. GroES binds to the apical surface of the GroEL ring, thereby capping the opening of the GroEL channel. This chain is Co-chaperonin GroES 3, found in Mesorhizobium japonicum (strain LMG 29417 / CECT 9101 / MAFF 303099) (Mesorhizobium loti (strain MAFF 303099)).